The primary structure comprises 875 residues: Translation initiation factor IF-2 (875 aa).

2 disordered regions span residues 123-204 (EKEK…EKPK) and 240-278 (ETKE…PVET). Positions 240 to 252 (ETKEEKAELEALR) are enriched in basic and acidic residues. Residues 259 to 268 (PKKKKKKKKK) show a composition bias toward basic residues. The span at 269-278 (KEEEKAPVET) shows a compositional bias: basic and acidic residues. One can recognise a tr-type G domain in the interval 379–547 (ERPPVVTVMG…NILLVSEILE (169 aa)). The interval 388–395 (GHVDHGKT) is G1. 388–395 (GHVDHGKT) provides a ligand contact to GTP. A G2 region spans residues 413 to 417 (GITQH). The segment at 435-438 (DTPG) is G3. GTP-binding positions include 435–439 (DTPGH) and 489–492 (NKID). A G4 region spans residues 489–492 (NKID). A G5 region spans residues 525–527 (SAK).

This sequence belongs to the TRAFAC class translation factor GTPase superfamily. Classic translation factor GTPase family. IF-2 subfamily.

Its subcellular location is the cytoplasm. Its function is as follows. One of the essential components for the initiation of protein synthesis. Protects formylmethionyl-tRNA from spontaneous hydrolysis and promotes its binding to the 30S ribosomal subunits. Also involved in the hydrolysis of GTP during the formation of the 70S ribosomal complex. The polypeptide is Translation initiation factor IF-2 (Persephonella marina (strain DSM 14350 / EX-H1)).